The chain runs to 881 residues: Mechanosensitive ion channel protein 4 (881 aa).

The tract at residues 35–245 (FWHNDKSSKP…EEEDPFSEED (211 aa)) is disordered. The segment covering 56–66 (FMRRSSEKSEE) has biased composition (basic and acidic residues). Polar residues-rich tracts occupy residues 73–82 (LINQFLNKQK), 100–118 (QKNT…SASP), and 206–230 (TPRS…NQGG). The span at 234–245 (LEEEEDPFSEED) shows a compositional bias: acidic residues. A run of 4 helical transmembrane segments spans residues 255-275 (ICVW…SLIC), 297-317 (VMVL…KLFV), 339-359 (KPVQ…FLFD), and 377-397 (VLIC…LVKV). The segment at 457 to 501 (GPKAVSSPPQVTVGSGRLQKSPSRVGKSPVLSRSGSKKEGGEEGI) is disordered. The span at 463-478 (SPPQVTVGSGRLQKSP) shows a compositional bias: polar residues. Residues 492–501 (SKKEGGEEGI) are compositionally biased toward basic and acidic residues. 2 helical membrane-spanning segments follow: residues 643-663 (IVDV…LGIA) and 678-698 (VVFV…FVFV).

Belongs to the MscS (TC 1.A.23) family.

It is found in the membrane. Functionally, mechanosensitive channel that opens in response to stretch forces in the membrane lipid bilayer. In Arabidopsis thaliana (Mouse-ear cress), this protein is Mechanosensitive ion channel protein 4 (MSL4).